The following is a 409-amino-acid chain: Tryptophan synthase beta chain (409 aa).

Lysine 98 carries the N6-(pyridoxal phosphate)lysine modification.

This sequence belongs to the TrpB family. In terms of assembly, tetramer of two alpha and two beta chains. Pyridoxal 5'-phosphate is required as a cofactor.

The enzyme catalyses (1S,2R)-1-C-(indol-3-yl)glycerol 3-phosphate + L-serine = D-glyceraldehyde 3-phosphate + L-tryptophan + H2O. It participates in amino-acid biosynthesis; L-tryptophan biosynthesis; L-tryptophan from chorismate: step 5/5. In terms of biological role, the beta subunit is responsible for the synthesis of L-tryptophan from indole and L-serine. This chain is Tryptophan synthase beta chain, found in Jannaschia sp. (strain CCS1).